We begin with the raw amino-acid sequence, 170 residues long: Shikimate kinase (170 aa).

15 to 20 (GTGKTT) is a binding site for ATP. Residue Thr19 coordinates Mg(2+). Substrate is bound by residues Asp37, Arg61, and Gly82. An ATP-binding site is contributed by Arg120. Arg138 is a substrate binding site. Position 154 (Gln154) interacts with ATP.

The protein belongs to the shikimate kinase family. Monomer. Mg(2+) serves as cofactor.

The protein localises to the cytoplasm. The enzyme catalyses shikimate + ATP = 3-phosphoshikimate + ADP + H(+). It functions in the pathway metabolic intermediate biosynthesis; chorismate biosynthesis; chorismate from D-erythrose 4-phosphate and phosphoenolpyruvate: step 5/7. Functionally, catalyzes the specific phosphorylation of the 3-hydroxyl group of shikimic acid using ATP as a cosubstrate. This chain is Shikimate kinase, found in Staphylococcus epidermidis (strain ATCC 35984 / DSM 28319 / BCRC 17069 / CCUG 31568 / BM 3577 / RP62A).